Reading from the N-terminus, the 268-residue chain is Imidazole glycerol phosphate synthase subunit HisF (268 aa).

Active-site residues include Asp-12 and Asp-131.

Belongs to the HisA/HisF family. In terms of assembly, heterodimer of HisH and HisF.

The protein resides in the cytoplasm. It carries out the reaction 5-[(5-phospho-1-deoxy-D-ribulos-1-ylimino)methylamino]-1-(5-phospho-beta-D-ribosyl)imidazole-4-carboxamide + L-glutamine = D-erythro-1-(imidazol-4-yl)glycerol 3-phosphate + 5-amino-1-(5-phospho-beta-D-ribosyl)imidazole-4-carboxamide + L-glutamate + H(+). Its pathway is amino-acid biosynthesis; L-histidine biosynthesis; L-histidine from 5-phospho-alpha-D-ribose 1-diphosphate: step 5/9. Its function is as follows. IGPS catalyzes the conversion of PRFAR and glutamine to IGP, AICAR and glutamate. The HisF subunit catalyzes the cyclization activity that produces IGP and AICAR from PRFAR using the ammonia provided by the HisH subunit. The sequence is that of Imidazole glycerol phosphate synthase subunit HisF from Methanoregula boonei (strain DSM 21154 / JCM 14090 / 6A8).